A 499-amino-acid polypeptide reads, in one-letter code: Putative protease Do-like 12, mitochondrial (499 aa).

The N-terminal 24 residues, 1 to 24 (MLFRSCVGMVSRYSRALLPTITIS), are a transit peptide targeting the mitochondrion. The tract at residues 94–259 (GGSGFAIAGK…IPTPIIRHFI (166 aa)) is serine protease. Active-site charge relay system residues include histidine 110, aspartate 144, and serine 222. Residues 272-356 (GSLVLSCQSM…DENILVKVLR (85 aa)) enclose the PDZ domain.

This sequence belongs to the peptidase S1C family.

The protein resides in the mitochondrion matrix. In terms of biological role, putative serine protease. This chain is Putative protease Do-like 12, mitochondrial (DEGP12), found in Arabidopsis thaliana (Mouse-ear cress).